A 399-amino-acid chain; its full sequence is P2X purinoceptor 1 (399 aa).

The Cytoplasmic portion of the chain corresponds to 1-28 (MARRLQDELSAFFFEYDTPRMVLVRNKK). A helical transmembrane segment spans residues 29–50 (VGVIFRLIQLVVLVYVIGWVFV). The Extracellular portion of the chain corresponds to 51–338 (YEKGYQTSSD…IPTMTTIGSG (288 aa)). CTP contacts are provided by Lys68, Lys70, and Lys140. Lys70 contacts ATP. Intrachain disulfides connect Cys117-Cys165, Cys126-Cys149, and Cys132-Cys159. N-linked (GlcNAc...) asparagine glycans are attached at residues Asn153 and Asn184. Position 186 (Thr186) interacts with CTP. Thr186 lines the ATP pocket. Residue Asn210 is glycosylated (N-linked (GlcNAc...) asparagine). 2 cysteine pairs are disulfide-bonded: Cys217-Cys227 and Cys261-Cys270. 3 residues coordinate ATP: Ser286, Asn290, and Arg292. Positions 290 and 292 each coordinate CTP. A glycan (N-linked (GlcNAc...) asparagine) is linked at Asn300. Residue Lys309 participates in CTP binding. ATP is bound at residue Lys309. The interval 331 to 338 (TMTTIGSG) is pore-forming motif. The chain crosses the membrane as a helical span at residues 339 to 358 (IGIFGVATVLCDLLLLHILP). Topologically, residues 359-399 (KRHYYKQKKFKYAEDMGPGEGEHDPVATSSTLGLQENMRTS) are cytoplasmic. Residues 374-399 (MGPGEGEHDPVATSSTLGLQENMRTS) form a disordered region. Residues 385-399 (ATSSTLGLQENMRTS) are compositionally biased toward polar residues. Phosphoserine occurs at positions 387 and 388. Thr389 is subject to Phosphothreonine.

This sequence belongs to the P2X receptor family. As to quaternary structure, functional P2XRs are organized as homomeric and heteromeric trimers. Homotrimer. Forms heterodimer with P2RX2. Forms heterodimer with P2RX4. Forms heterodimer with P2RX5. As to expression, high levels in vas deferens and urinary bladder. Lower extent in spinal cord, coeliac ganglion, lung and spleen (probably in the smooth muscle part of both organs).

It is found in the cell membrane. It carries out the reaction Ca(2+)(in) = Ca(2+)(out). The enzyme catalyses K(+)(in) = K(+)(out). It catalyses the reaction Na(+)(in) = Na(+)(out). With respect to regulation, activated by low concentrations of ATP (&lt;1 uM). Undergoes rapid desensitisation. Sensitives to the ATP agonist:alpha/beta-methylene-ATP. Modulated by cholesterol. Functionally, ATP-gated nonselective transmembrane cation channel permeable to potassium, sodium and with relatively high calcium permeability. Furthermore, CTP functions as a weak affinity agonist for P2RX1. Plays a role a role in urogenital, immune and cardiovascular function. Specifically, plays an important role in neurogenic contraction of smooth muscle of the vas deferens, and therefore is essential for normal male reproductive function. In addition, contributes to smooth muscle contractions of the urinary bladder. On platelets, contributes to platelet activation and aggregation and thereby, also to thrombosis. On neutrophils, it is involved in chemotaxis and in mitigating the activation of circulating cells. In Rattus norvegicus (Rat), this protein is P2X purinoceptor 1 (P2rx1).